The sequence spans 92 residues: ATP synthase subunit c (92 aa).

The next 2 membrane-spanning stretches (helical) occupy residues 20–40 (GAGL…GTGL) and 71–91 (MAIS…LVFV).

This sequence belongs to the ATPase C chain family. As to quaternary structure, F-type ATPases have 2 components, F(1) - the catalytic core - and F(0) - the membrane proton channel. F(1) has five subunits: alpha(3), beta(3), gamma(1), delta(1), epsilon(1). F(0) has three main subunits: a(1), b(2) and c(10-14). The alpha and beta chains form an alternating ring which encloses part of the gamma chain. F(1) is attached to F(0) by a central stalk formed by the gamma and epsilon chains, while a peripheral stalk is formed by the delta and b chains.

The protein resides in the cell membrane. F(1)F(0) ATP synthase produces ATP from ADP in the presence of a proton or sodium gradient. F-type ATPases consist of two structural domains, F(1) containing the extramembraneous catalytic core and F(0) containing the membrane proton channel, linked together by a central stalk and a peripheral stalk. During catalysis, ATP synthesis in the catalytic domain of F(1) is coupled via a rotary mechanism of the central stalk subunits to proton translocation. Functionally, key component of the F(0) channel; it plays a direct role in translocation across the membrane. A homomeric c-ring of between 10-14 subunits forms the central stalk rotor element with the F(1) delta and epsilon subunits. The sequence is that of ATP synthase subunit c from Mycoplasmopsis pulmonis (strain UAB CTIP) (Mycoplasma pulmonis).